The following is a 683-amino-acid chain: Amino acid transporter heavy chain SLC3A1 (683 aa).

A compositionally biased stretch (basic and acidic residues) spans 1–10 (MNEDKDKRDS). A disordered region spans residues 1-50 (MNEDKDKRDSIQMSMKGCRTNNGFVQNEDIQEQDPDSRDTPQSNAVSIPA). Residues 1–86 (MNEDKDKRDS…ARYRVPREIL (86 aa)) lie on the Cytoplasmic side of the membrane. Residue S10 is modified to Phosphoserine. The helical; Signal-anchor for type II membrane protein transmembrane segment at 87-107 (FWLTVVSVFLLIGATIAIIII) threads the bilayer. Over 108–683 (SPKCLDWWQA…SVLDLLYSSC (576 aa)) the chain is Extracellular. N211 is a binding site for Ca(2+). N-linked (GlcNAc...) asparagine glycosylation is found at N211, N238, and N258. C239 and C270 are disulfide-bonded. D281, F315, L316, and E318 together coordinate Ca(2+). N329 carries an N-linked (GlcNAc...) asparagine glycan. At S383 the chain carries Phosphoserine. N510, N520, and N574 each carry an N-linked (GlcNAc...) asparagine glycan. Disulfide bonds link C568/C664 and C671/C683.

As to quaternary structure, disulfide-linked heterodimer composed of the catalytic light subunit SLC7A9 and the heavy subunit SLC3A1. The heterodimer is the minimal functional unit. Assembles in non-covalently linked heterotetramers (dimers of heterodimers) and higher order oligomers; the oligomerization is mediated by SLC3A1 likely to prevent degradation in the endoplasmic reticulum and facilitate heteromer trafficking to the plasma membrane. Disulfide-linked heterodimer composed of the catalytic light subunit SLC7A13 and the heavy subunit SLC3A1. Predominantly expressed in kidney and intestine. In kidney localized to the apical membrane of the proximal tubules.

The protein localises to the cell membrane. Its subcellular location is the apical cell membrane. In terms of biological role, acts as a chaperone that facilitates biogenesis and trafficking of functional transporter heteromers to the plasma membrane. Associates with SLC7A9 to form a functional transporter complex that mediates the electrogenic exchange between cationic amino acids and neutral amino acids, with a stoichiometry of 1:1. SLC7A9-SLC3A1 transporter has system b(0,+)-like activity with high affinity for extracellular cationic amino acids and L-cystine and lower affinity for intracellular neutral amino acids. Substrate exchange is driven by high concentration of intracellular neutral amino acids and the intracellular reduction of L-cystine to L-cysteine. SLC7A9-SLC3A1 acts as a major transporter for reabsorption of L-cystine and dibasic amino acids across the brush border membrane in early proximal tubules. Associates with SLC7A13 to form a functional complex that transports anionic and neutral amino acids via exchange or facilitated diffusion. SLC7A13-SLC3A1 may act as a major transporter for L-cystine in late proximal tubules, ensuring its reabsorption from the luminal fluid in exchange for cytosolic L-glutamate or L-aspartate. This chain is Amino acid transporter heavy chain SLC3A1 (Slc3a1), found in Rattus norvegicus (Rat).